The chain runs to 301 residues: Mitochondrial import receptor subunit TOM40 homolog (301 aa).

A compositionally biased stretch (polar residues) spans 1–19 (MATPTESELASPIPQTNPG). Residues 1 to 20 (MATPTESELASPIPQTNPGS) form a disordered region.

Belongs to the Tom40 family. As to quaternary structure, forms part of the preprotein translocase complex of the outer mitochondrial membrane (TOM complex). Interacts with mitochondrial targeting sequences. As to expression, ubiquitously expressed, but highly expressed in the pharyngeal muscles, the nerve ring, the intestine, gonadal sheath and in the tail hypodermis.

Its subcellular location is the mitochondrion outer membrane. In terms of biological role, channel-forming protein essential for import of protein precursors into mitochondria. Specifically required for nnt-1 accumulation in the mitochondria and may be involved in the secretion of daf-28/insulin from the mitochondria. Required for embryonic and larval development. This Caenorhabditis elegans protein is Mitochondrial import receptor subunit TOM40 homolog.